Consider the following 194-residue polypeptide: Dephospho-CoA kinase (194 aa).

The DPCK domain occupies 4-194 (VIGLTGSIGM…VKEILQKLGA (191 aa)). 12-17 (GMGKTT) contacts ATP.

It belongs to the CoaE family.

Its subcellular location is the cytoplasm. The enzyme catalyses 3'-dephospho-CoA + ATP = ADP + CoA + H(+). It participates in cofactor biosynthesis; coenzyme A biosynthesis; CoA from (R)-pantothenate: step 5/5. In terms of biological role, catalyzes the phosphorylation of the 3'-hydroxyl group of dephosphocoenzyme A to form coenzyme A. The chain is Dephospho-CoA kinase from Agrobacterium fabrum (strain C58 / ATCC 33970) (Agrobacterium tumefaciens (strain C58)).